The primary structure comprises 392 residues: Phosphoglycerate kinase (392 aa).

Substrate-binding positions include 21–23 (DFN), Arg-36, 59–62 (HLGR), Arg-113, and Arg-146. ATP is bound by residues Lys-197, Glu-319, and 345–348 (GGDT).

This sequence belongs to the phosphoglycerate kinase family. In terms of assembly, monomer.

It localises to the cytoplasm. It carries out the reaction (2R)-3-phosphoglycerate + ATP = (2R)-3-phospho-glyceroyl phosphate + ADP. The protein operates within carbohydrate degradation; glycolysis; pyruvate from D-glyceraldehyde 3-phosphate: step 2/5. The polypeptide is Phosphoglycerate kinase (Francisella tularensis subsp. holarctica (strain FTNF002-00 / FTA)).